Reading from the N-terminus, the 347-residue chain is Protein RecA (347 aa).

Residue 64–71 (GPESSGKT) coordinates ATP.

Belongs to the RecA family.

It localises to the cytoplasm. Its function is as follows. Can catalyze the hydrolysis of ATP in the presence of single-stranded DNA, the ATP-dependent uptake of single-stranded DNA by duplex DNA, and the ATP-dependent hybridization of homologous single-stranded DNAs. It interacts with LexA causing its activation and leading to its autocatalytic cleavage. This is Protein RecA from Bartonella tribocorum (strain CIP 105476 / IBS 506).